We begin with the raw amino-acid sequence, 359 residues long: S-adenosylmethionine:tRNA ribosyltransferase-isomerase (359 aa).

The protein belongs to the QueA family. As to quaternary structure, monomer.

It is found in the cytoplasm. The catalysed reaction is 7-aminomethyl-7-carbaguanosine(34) in tRNA + S-adenosyl-L-methionine = epoxyqueuosine(34) in tRNA + adenine + L-methionine + 2 H(+). It functions in the pathway tRNA modification; tRNA-queuosine biosynthesis. Its function is as follows. Transfers and isomerizes the ribose moiety from AdoMet to the 7-aminomethyl group of 7-deazaguanine (preQ1-tRNA) to give epoxyqueuosine (oQ-tRNA). The sequence is that of S-adenosylmethionine:tRNA ribosyltransferase-isomerase from Alcanivorax borkumensis (strain ATCC 700651 / DSM 11573 / NCIMB 13689 / SK2).